Consider the following 367-residue polypeptide: Heme A synthase (367 aa).

Transmembrane regions (helical) follow at residues 25-45 (AIRI…LVGG), 111-131 (FLAR…VLTG), 137-157 (LWLP…IGWW), 174-194 (LATH…FMRA), and 211-231 (LAGL…LVAG). Residue His-274 coordinates heme. 3 consecutive transmembrane segments (helical) span residues 276 to 296 (LGAY…LRAA), 305 to 325 (SVVL…TLLL), and 327 to 347 (VPLH…GFAI). Heme is bound at residue His-335.

This sequence belongs to the COX15/CtaA family. Type 2 subfamily. Interacts with CtaB. Heme b is required as a cofactor.

The protein localises to the cell membrane. The catalysed reaction is Fe(II)-heme o + 2 A + H2O = Fe(II)-heme a + 2 AH2. It functions in the pathway porphyrin-containing compound metabolism; heme A biosynthesis; heme A from heme O: step 1/1. Its function is as follows. Catalyzes the conversion of heme O to heme A by two successive hydroxylations of the methyl group at C8. The first hydroxylation forms heme I, the second hydroxylation results in an unstable dihydroxymethyl group, which spontaneously dehydrates, resulting in the formyl group of heme A. The protein is Heme A synthase of Rhizobium rhizogenes (strain K84 / ATCC BAA-868) (Agrobacterium radiobacter).